A 68-amino-acid chain; its full sequence is Large ribosomal subunit protein uL29 (68 aa).

Belongs to the universal ribosomal protein uL29 family.

The protein is Large ribosomal subunit protein uL29 of Streptococcus pneumoniae (strain JJA).